A 142-amino-acid polypeptide reads, in one-letter code: Mitochondrial import receptor subunit TOM22 homolog (142 aa).

The span at 1–11 (MAAAVAAAGAG) shows a compositional bias: low complexity. Residues 1–42 (MAAAVAAAGAGEPQSPDELLPKGDAEKPEEELEEDDDEELDE) are disordered. Ala2 is subject to N-acetylalanine. The Cytoplasmic portion of the chain corresponds to 2–83 (AAAVAAAGAG…AQKMYRFSRA (82 aa)). A Phosphoserine modification is found at Ser15. Residues 27–42 (KPEEELEEDDDEELDE) show a composition bias toward acidic residues. The segment at 41–50 (DETLSERLWG) is import sequence; necessary for mitochondrion outer membrane localization and integration in the TOM complex. At Thr43 the chain carries Phosphothreonine. Ser45 is modified (phosphoserine). Residues 83-103 (AALWIGTTSFMILVLPVVFET) are TMD; necessary for mitochondrion outer membrane localization and integration in the TOM complex. Residues 84–103 (ALWIGTTSFMILVLPVVFET) form a helical membrane-spanning segment. At 104-142 (EKLQMEQQQQLQQRQILLGPNTGLSGGMPGALPSLPGKI) the chain is on the mitochondrial intermembrane side. Residues 123–142 (PNTGLSGGMPGALPSLPGKI) are C-tail signal; necessary for mitochondrion outer membrane localization and integration in the TOM complex.

The protein belongs to the Tom22 family. In terms of assembly, forms part of the preprotein translocase complex of the outer mitochondrial membrane (TOM complex) which consists of at least 7 different proteins (TOMM5, TOMM6, TOMM7, TOMM20, TOMM22, TOMM40 and TOMM70). Interacts with TOMM40. Interacts with PPP2R2B. In terms of tissue distribution, ubiquitous.

The protein resides in the mitochondrion outer membrane. Its function is as follows. Central receptor component of the translocase of the outer membrane of mitochondria (TOM complex) responsible for the recognition and translocation of cytosolically synthesized mitochondrial preproteins. Together with the peripheral receptor TOM20 functions as the transit peptide receptor and facilitates the movement of preproteins into the translocation pore. Required for the translocation across the mitochondrial outer membrane of cytochrome P450 monooxygenases. In Homo sapiens (Human), this protein is Mitochondrial import receptor subunit TOM22 homolog (TOMM22).